Consider the following 399-residue polypeptide: MFLTRRLLGPFTSAIARKLEHYSQFQPSSLTIQQYLDFGQTGTMKSSFLFLKNELLVRLANIMQEISLLPPTLLKMPSRRLVSNWYCESFEDLLQFEHAQVEPDIMSKFNDQLQTILKRHSRVVETMAEGLIELRESEGVDIASERGIQYFLDRFYINRISIRMLQNQHLVVFGVVLPESPRHIGCIDPGCDVESVVHDAYENARFLCERYYLTAPGMKLEMHNSVNPGMPISIVAVPSHLYHIMFELFKNSMRATVENHGADEDLPPIKVMVVRGAEDLSIKISDRGGGVSRTILDRLFTYMYSTAPPPPRDGTQPPLAGYGYGLPLSRLYARYFHGDMYLVSMEGYGTDAMIFLKAIPVEASEVLPIYSTSSRRQLTMSPQAADWSHQLPNHGNRNL.

The transit peptide at 1 to 18 directs the protein to the mitochondrion; that stretch reads MFLTRRLLGPFTSAIARK. Residues 123-360 form the Histidine kinase domain; sequence VVETMAEGLI…DAMIFLKAIP (238 aa). Residues 247 to 254, Asp286, 305 to 306, and 321 to 326 contribute to the ATP site; these read ELFKNSMR, ST, and GYGYGL.

The protein belongs to the PDK/BCKDK protein kinase family.

It localises to the mitochondrion matrix. The enzyme catalyses L-seryl-[pyruvate dehydrogenase E1 alpha subunit] + ATP = O-phospho-L-seryl-[pyruvate dehydrogenase E1 alpha subunit] + ADP + H(+). Its function is as follows. Inhibits the mitochondrial pyruvate dehydrogenase complex by phosphorylation of the E1 alpha subunit, thus contributing to the regulation of glucose metabolism. This chain is [Pyruvate dehydrogenase (acetyl-transferring)] kinase, mitochondrial, found in Ascaris suum (Pig roundworm).